The following is an 805-amino-acid chain: Leucine--tRNA ligase (805 aa).

The 'HIGH' region signature appears at 40–51 (PYPSGAGLHVGH). The 'KMSKS' region motif lies at 576–580 (KMSKS). Lys579 contacts ATP.

It belongs to the class-I aminoacyl-tRNA synthetase family.

It localises to the cytoplasm. It catalyses the reaction tRNA(Leu) + L-leucine + ATP = L-leucyl-tRNA(Leu) + AMP + diphosphate. This Anoxybacillus flavithermus (strain DSM 21510 / WK1) protein is Leucine--tRNA ligase.